The primary structure comprises 193 residues: Putative RNA methyltransferase At5g10620 (193 aa).

S-adenosyl-L-methionine-binding positions include Leu-110, Gly-142, and 161–166 (LSSMVL).

It belongs to the RNA methyltransferase RlmH family.

The polypeptide is Putative RNA methyltransferase At5g10620 (Arabidopsis thaliana (Mouse-ear cress)).